Here is a 470-residue protein sequence, read N- to C-terminus: Probable V-type proton ATPase subunit H 2 (470 aa).

This sequence belongs to the V-ATPase H subunit family. V-ATPase is a heteromultimeric enzyme made up of two complexes: the ATP-hydrolytic V1 complex and the proton translocation V0 complex. The V1 complex consists of three catalytic AB heterodimers that form a heterohexamer, three peripheral stalks each consisting of EG heterodimers, one central rotor including subunits D and F, and the regulatory subunits C and H. The proton translocation complex V0 consists of the proton transport subunit a, a ring of proteolipid subunits c9c'', rotary subunit d, subunits e and f, and the accessory subunits vah-19/Ac45 and vah-20/PRR.

Subunit of the V1 complex of vacuolar(H+)-ATPase (V-ATPase), a multisubunit enzyme composed of a peripheral complex (V1) that hydrolyzes ATP and a membrane integral complex (V0) that translocates protons. V-ATPase is responsible for acidifying and maintaining the pH of intracellular compartments and in some cell types, is targeted to the plasma membrane, where it is responsible for acidifying the extracellular environment. Subunit H is essential for V-ATPase activity, but not for the assembly of the complex. This Caenorhabditis elegans protein is Probable V-type proton ATPase subunit H 2.